The sequence spans 317 residues: Beta-ketoacyl-[acyl-carrier-protein] synthase III (317 aa).

Active-site residues include C112 and H244. Residues 245-249 form an ACP-binding region; the sequence is QANIR. The active site involves N274.

This sequence belongs to the thiolase-like superfamily. FabH family. In terms of assembly, homodimer.

The protein localises to the cytoplasm. The enzyme catalyses malonyl-[ACP] + acetyl-CoA + H(+) = 3-oxobutanoyl-[ACP] + CO2 + CoA. It participates in lipid metabolism; fatty acid biosynthesis. Functionally, catalyzes the condensation reaction of fatty acid synthesis by the addition to an acyl acceptor of two carbons from malonyl-ACP. Catalyzes the first condensation reaction which initiates fatty acid synthesis and may therefore play a role in governing the total rate of fatty acid production. Possesses both acetoacetyl-ACP synthase and acetyl transacylase activities. Its substrate specificity determines the biosynthesis of branched-chain and/or straight-chain of fatty acids. The polypeptide is Beta-ketoacyl-[acyl-carrier-protein] synthase III (Rickettsia felis (strain ATCC VR-1525 / URRWXCal2) (Rickettsia azadi)).